The chain runs to 119 residues: Beta-2-microglobulin (119 aa).

A signal peptide spans 1-20 (MARFVVVALLVQLSLFGLEA). Positions 25–114 (PKIQVYSRYP…VTFSTPKTVK (90 aa)) constitute an Ig-like C1-type domain. C45 and C100 are oxidised to a cystine.

This sequence belongs to the beta-2-microglobulin family. In terms of assembly, heterodimer of an alpha chain and a beta chain. Beta-2-microglobulin is the beta-chain of major histocompatibility complex class I molecules.

The protein localises to the secreted. Functionally, component of the class I major histocompatibility complex (MHC). Involved in the presentation of peptide antigens to the immune system. The chain is Beta-2-microglobulin (B2M) from Saguinus imperator (Emperor tamarin).